The primary structure comprises 38 residues: Toxin BmK NSPK (38 aa).

3 cysteine pairs are disulfide-bonded: cysteine 7–cysteine 27, cysteine 13–cysteine 32, and cysteine 17–cysteine 34.

Expressed by the venom gland.

The protein resides in the secreted. In terms of biological role, blocks voltage-gated potassium (Kv) channel and augments neurite extension via NGF/TrkA signaling pathway. This is Toxin BmK NSPK from Olivierus martensii (Manchurian scorpion).